The following is a 68-amino-acid chain: Large ribosomal subunit protein bL33c (68 aa).

The protein belongs to the bacterial ribosomal protein bL33 family.

It is found in the plastid. The protein resides in the chloroplast. This Lactuca sativa (Garden lettuce) protein is Large ribosomal subunit protein bL33c.